Here is an 807-residue protein sequence, read N- to C-terminus: 85/88 kDa calcium-independent phospholipase A2 (807 aa).

Phosphoserine is present on serine 13. 9 ANK repeats span residues 120-147 (WTVT…ANST), 151-181 (EGCT…QMDV), 185-215 (KGET…GLNQ), 219-248 (QGLT…RCNI), 251-281 (PGGF…QIHS), 286-312 (YGAS…DVDS), 316-345 (SGNT…NAGA), 349-378 (HGNT…EVDT), and 382-403 (FGET…KALL). The next 2 helical transmembrane spans lie at 481–501 (LLCL…LIAI) and 512–532 (LFDW…ILHS). A PNPLA domain is found at 482–666 (LCLDGGGVKG…LANNPTLDAM (185 aa)). A GXGXXG motif is present at residues 486 to 491 (GGGVKG). The short motif at 518–522 (GTSTG) is the GXSXG element. Serine 520 acts as the Nucleophile in catalysis. Residue aspartate 653 is the Proton acceptor of the active site. The short motif at 653-655 (DGG) is the DGA/G element. The calmodulin-binding (1-9-14 motif) stretch occupies residues 678 to 687 (RKGQGNKVKK). Residues 749–760 (AWCEMVGIQYFR) are calmodulin-binding (IQ motif).

As to quaternary structure, homodimer formed by catalytic domains tightly interacting through a large hydrophobic interface. The contact area involves 3 alpha helices, several loops and a part of the beta sheet from each monomer. Both active sites of the dimer are in close proximity adopting an open conformation that provide sufficient space for phospholipid access and favoring cooperativity in deacylation-reacylation reactions. Each monomer has 9 ankyrin repeats stacked side-by-side in an elongated structure oriented outwards from the catalytic core. In terms of tissue distribution, expressed in pancreatic beta-cells. Expressed in skeletal muscle (at protein level).

Its subcellular location is the cytoplasm. The protein resides in the cell membrane. The protein localises to the mitochondrion. It is found in the cell projection. It localises to the pseudopodium. The enzyme catalyses a 1,2-diacyl-sn-glycero-3-phosphocholine + H2O = a 1-acyl-sn-glycero-3-phosphocholine + a fatty acid + H(+). It catalyses the reaction a 1-O-alkyl-2-acyl-sn-glycero-3-phosphocholine + H2O = a 1-O-alkyl-sn-glycero-3-phosphocholine + a fatty acid + H(+). The catalysed reaction is 1,2-dihexadecanoyl-sn-glycero-3-phosphocholine + H2O = 1-hexadecanoyl-sn-glycero-3-phosphocholine + hexadecanoate + H(+). It carries out the reaction 1-hexadecanoyl-2-(9Z-octadecenoyl)-sn-glycero-3-phosphocholine + H2O = 1-hexadecanoyl-sn-glycero-3-phosphocholine + (9Z)-octadecenoate + H(+). The enzyme catalyses 1-hexadecanoyl-2-(9Z,12Z-octadecadienoyl)-sn-glycero-3-phosphocholine + H2O = (9Z,12Z)-octadecadienoate + 1-hexadecanoyl-sn-glycero-3-phosphocholine + H(+). It catalyses the reaction 1-hexadecanoyl-2-(5Z,8Z,11Z,14Z-eicosatetraenoyl)-sn-glycero-3-phosphocholine + H2O = 1-hexadecanoyl-sn-glycero-3-phosphocholine + (5Z,8Z,11Z,14Z)-eicosatetraenoate + H(+). The catalysed reaction is 1-octadecanoyl-2-(5Z,8Z,11Z,14Z-eicosatetraenoyl)-sn-glycero-3-phosphocholine + H2O = 1-octadecanoyl-sn-glycero-3-phosphocholine + (5Z,8Z,11Z,14Z)-eicosatetraenoate + H(+). It carries out the reaction 1-hexadecanoyl-2-(5Z,8Z,11Z,14Z-eicosatetraenoyl)-sn-glycero-3-phosphoethanolamine + H2O = 1-hexadecanoyl-sn-glycero-3-phosphoethanolamine + (5Z,8Z,11Z,14Z)-eicosatetraenoate + H(+). The enzyme catalyses 1,2-dihexadecanoyl-sn-glycero-3-phosphate + H2O = 1-hexadecanoyl-sn-glycero-3-phosphate + hexadecanoate + H(+). It catalyses the reaction a 1-acyl-sn-glycero-3-phosphocholine + H2O = sn-glycerol 3-phosphocholine + a fatty acid + H(+). The catalysed reaction is 1-hexadecanoyl-sn-glycero-3-phosphocholine + H2O = sn-glycerol 3-phosphocholine + hexadecanoate + H(+). It carries out the reaction 1-(5Z,8Z,11Z,14Z-eicosatetraenoyl)-sn-glycero-3-phosphocholine + H2O = sn-glycerol 3-phosphocholine + (5Z,8Z,11Z,14Z)-eicosatetraenoate + H(+). The enzyme catalyses 2-(5Z,8Z,11Z,14Z)-eicosatetraenoyl-sn-glycero-3-phosphocholine + H2O = sn-glycerol 3-phosphocholine + (5Z,8Z,11Z,14Z)-eicosatetraenoate + H(+). It catalyses the reaction 1-O-hexadecyl-2-(5Z,8Z,11Z,14Z)-eicosatetraenoyl-sn-glycero-3-phosphocholine + H2O = 1-O-hexadecyl-sn-glycero-3-phosphocholine + (5Z,8Z,11Z,14Z)-eicosatetraenoate + H(+). The catalysed reaction is 1-O-hexadecyl-2-acetyl-sn-glycero-3-phosphocholine + H2O = 1-O-hexadecyl-sn-glycero-3-phosphocholine + acetate + H(+). It carries out the reaction hexadecanoyl-CoA + H2O = hexadecanoate + CoA + H(+). The enzyme catalyses 1',3'-bis[1,2-di-(9Z-octadecenoyl)-sn-glycero-3-phospho]-glycerol + H2O = 1'-[1,2-di-(9Z-octadecenoyl)-sn-glycero-3-phospho]-3'-[1-(9Z-octadecenoyl)-sn-glycero-3-phospho]-glycerol + (9Z)-octadecenoate + H(+). It catalyses the reaction 1'-[1,2-di-(9Z-octadecenoyl)-sn-glycero-3-phospho]-3'-[1-(9Z-octadecenoyl)-sn-glycero-3-phospho]-glycerol + H2O = 1',3'-bis-[1-(9Z-octadecenoyl)-sn-glycero-3-phospho]-glycerol + (9Z)-octadecenoate + H(+). The catalysed reaction is 1',3'-bis-[1,2-di-(9Z,12Z-octadecadienoyl)-sn-glycero-3-phospho]-glycerol + H2O = 1'-[1,2-di-(9Z,12Z-octadecadienoyl)-sn-glycero-3-phospho]-3'-[1-(9Z,12Z-octadecadienoyl)-sn-glycero-3-phospho]-glycerol + (9Z,12Z)-octadecadienoate + H(+). It carries out the reaction 1-octadecanoyl-2-(15-hydroxy-(5Z,8Z,11Z,13E)-eicosatetraenoyl)-sn-glycero-3-phosphoethanolamine + H2O = 1-octadecanoyl-sn-glycero-3-phosphoethanolamine + 15-hydroxy-(5Z,8Z,11Z,13E)-eicosatetraenoate + H(+). Its activity is regulated as follows. Activated by ATP. Inhibited by calcium-activated calmodulin. Inhibited by bromoenol lactone (BEL). In terms of biological role, calcium-independent phospholipase involved in phospholipid remodeling with implications in cellular membrane homeostasis, mitochondrial integrity and signal transduction. Hydrolyzes the ester bond of the fatty acyl group attached at sn-1 or sn-2 position of phospholipids (phospholipase A1 and A2 activity respectively), producing lysophospholipids that are used in deacylation-reacylation cycles. Hydrolyzes both saturated and unsaturated long fatty acyl chains in various glycerophospholipid classes such as phosphatidylcholines, phosphatidylethanolamines and phosphatidates, with a preference for hydrolysis at sn-2 position. Can further hydrolyze lysophospholipids carrying saturated fatty acyl chains (lysophospholipase activity). Upon oxidative stress, contributes to remodeling of mitochondrial phospholipids in pancreatic beta cells, in a repair mechanism to reduce oxidized lipid content. Preferentially hydrolyzes oxidized polyunsaturated fatty acyl chains from cardiolipins, yielding monolysocardiolipins that can be reacylated with unoxidized fatty acyls to regenerate native cardiolipin species. Hydrolyzes oxidized glycerophosphoethanolamines present in pancreatic islets, releasing oxidized polyunsaturated fatty acids such as hydroxyeicosatetraenoates (HETEs). Has thioesterase activity toward fatty-acyl CoA releasing CoA-SH known to facilitate fatty acid transport and beta-oxidation in mitochondria particularly in skeletal muscle. Plays a role in regulation of membrane dynamics and homeostasis. Selectively hydrolyzes sn-2 arachidonoyl group in plasmalogen phospholipids, structural components of lipid rafts and myelin. Regulates F-actin polymerization at the pseudopods, which is required for both speed and directionality of MCP1/CCL2-induced monocyte chemotaxis. Targets membrane phospholipids to produce potent lipid signaling messengers. Generates lysophosphatidate (LPA, 1-acyl-glycerol-3-phosphate), which acts via G-protein receptors in various cell types. Has phospholipase A2 activity toward platelet-activating factor (PAF, 1-O-alkyl-2-acetyl-sn-glycero-3-phosphocholine), likely playing a role in inactivation of this potent pro-inflammatory signaling lipid. In response to glucose, amplifies calcium influx in pancreatic beta cells to promote INS secretion. This chain is 85/88 kDa calcium-independent phospholipase A2 (Pla2g6), found in Rattus norvegicus (Rat).